The primary structure comprises 159 residues: 3-dehydroquinate dehydratase (159 aa).

Tyr-22 acts as the Proton acceptor in catalysis. Substrate contacts are provided by Asn-73, His-79, and Asp-86. His-99 acts as the Proton donor in catalysis. Residues 100-101 (IS) and Arg-110 contribute to the substrate site.

It belongs to the type-II 3-dehydroquinase family. As to quaternary structure, homododecamer.

It catalyses the reaction 3-dehydroquinate = 3-dehydroshikimate + H2O. The protein operates within metabolic intermediate biosynthesis; chorismate biosynthesis; chorismate from D-erythrose 4-phosphate and phosphoenolpyruvate: step 3/7. Functionally, catalyzes a trans-dehydration via an enolate intermediate. The sequence is that of 3-dehydroquinate dehydratase from Campylobacter jejuni subsp. jejuni serotype O:6 (strain 81116 / NCTC 11828).